A 373-amino-acid chain; its full sequence is AA9 family lytic polysaccharide monooxygenase A (373 aa).

Residues 1 to 20 (MKSSTFGMLALAAAAKLVSA) form the signal peptide. Residue H21 participates in Cu(2+) binding. The segment at 36-55 (EGNSQSGYIRSPPSNSPITD) is disordered. The cysteines at positions 63 and 183 are disulfide-linked. H102 is a Cu(2+) binding site. O2-binding residues include H169 and Q178. Y180 lines the Cu(2+) pocket. Residues 234-333 (GASGSSSSSS…NSVPQPSSNA (100 aa)) are disordered. Low complexity-rich tracts occupy residues 235–262 (ASGSSSSSSSSASASAPAPTSAAPAPSS) and 270–323 (PATS…AAPT). Polar residues predominate over residues 324–333 (NSVPQPSSNA). Residues 335–371 (GAVKEWYQCGGLNYSGSTQCEEGLTCKKWNPYYHQCV) enclose the CBM1 domain. Residue N347 is glycosylated (N-linked (GlcNAc...) asparagine).

Belongs to the polysaccharide monooxygenase AA9 family. It depends on Cu(2+) as a cofactor.

It is found in the secreted. It carries out the reaction [(1-&gt;4)-beta-D-glucosyl]n+m + reduced acceptor + O2 = 4-dehydro-beta-D-glucosyl-[(1-&gt;4)-beta-D-glucosyl]n-1 + [(1-&gt;4)-beta-D-glucosyl]m + acceptor + H2O.. Functionally, lytic polysaccharide monooxygenase (LPMO) that depolymerizes crystalline and amorphous polysaccharides via the oxidation of scissile alpha- or beta-(1-4)-glycosidic bonds, yielding exclusively C4 oxidation products. Catalysis by LPMOs requires the reduction of the active-site copper from Cu(II) to Cu(I) by a reducing agent and H(2)O(2) or O(2) as a cosubstrate. In addition to cellulose, also cleaves the beta-(1!4)-glucan backbone of tamarind xyloglucan, but only next to unsubstituted glucosyl units. The protein is AA9 family lytic polysaccharide monooxygenase A of Aspergillus tamarii.